A 336-amino-acid chain; its full sequence is Dihydroorotate dehydrogenase (quinone) (336 aa).

Residues A62–K66 and T86 each bind FMN. K66 lines the substrate pocket. N111–F115 provides a ligand contact to substrate. FMN contacts are provided by N139 and N172. N172 is a substrate binding site. S175 serves as the catalytic Nucleophile. A substrate-binding site is contributed by N177. Positions 217 and 245 each coordinate FMN. A substrate-binding site is contributed by N246–T247. Residues G268, G297, and Y318–S319 contribute to the FMN site.

The protein belongs to the dihydroorotate dehydrogenase family. Type 2 subfamily. In terms of assembly, monomer. It depends on FMN as a cofactor.

It is found in the cell membrane. The enzyme catalyses (S)-dihydroorotate + a quinone = orotate + a quinol. The protein operates within pyrimidine metabolism; UMP biosynthesis via de novo pathway; orotate from (S)-dihydroorotate (quinone route): step 1/1. Its function is as follows. Catalyzes the conversion of dihydroorotate to orotate with quinone as electron acceptor. The sequence is that of Dihydroorotate dehydrogenase (quinone) from Serratia proteamaculans (strain 568).